The following is a 226-amino-acid chain: Cobalt transport protein CbiM 1 (226 aa).

Helical transmembrane passes span 6-26, 43-63, 75-95, 107-127, 135-155, and 181-201; these read GFLP…VVAY, MLLG…MPSV, LGAI…VLLF, TLGA…AAVF, FPFG…TYVT, and VFAL…VVVM.

This sequence belongs to the CbiM family. As to quaternary structure, forms an energy-coupling factor (ECF) transporter complex composed of an ATP-binding protein (A component, CbiO), a transmembrane protein (T component, CbiQ) and 2 possible substrate-capture proteins (S components, CbiM and CbiN) of unknown stoichimetry.

Its subcellular location is the cell inner membrane. Its pathway is cofactor biosynthesis; adenosylcobalamin biosynthesis. Part of the energy-coupling factor (ECF) transporter complex CbiMNOQ involved in cobalt import. This is Cobalt transport protein CbiM 1 (cbim1) from Pelobacter propionicus (strain DSM 2379 / NBRC 103807 / OttBd1).